A 145-amino-acid polypeptide reads, in one-letter code: Halilectin 3, alpha chain (145 aa).

An N-linked (GlcNAc...) asparagine glycan is attached at asparagine 73.

In terms of assembly, probable heterotrimer consisting of an alpha chain and two beta chains. The alpha chain can probably have different glycosylation states. In terms of processing, glycosylated.

Functionally, lectin with affinity for N-acetyl-galactosamine, carragenan and glycoprotein porcine stomach mucin (PSM). Has metal-independent hemagglutinating activity towards erythrocytes from rabbit and human. Hemagglutinating activity is not inhibited by D-galactose, D-glucose, D-mannose, D-fucose, methyl-alpha-D-galactopyranoside, methyl-alpha-D-glucopyranoside, N-acetyl-glucosamine, N-acetyl-mannosamine, D-fructose, alpha-D-lactose, beta-D-lactose, D-lactulose, D-sucrose, fucoidan or glycoproteins thyroglobulin and ovalmucoid. The polypeptide is Halilectin 3, alpha chain (Haliclona caerulea (Blue Caribbean sponge)).